A 126-amino-acid polypeptide reads, in one-letter code: Holo-[acyl-carrier-protein] synthase (126 aa).

Mg(2+)-binding residues include aspartate 9 and glutamate 58.

The protein belongs to the P-Pant transferase superfamily. AcpS family. Mg(2+) serves as cofactor.

It is found in the cytoplasm. The catalysed reaction is apo-[ACP] + CoA = holo-[ACP] + adenosine 3',5'-bisphosphate + H(+). In terms of biological role, transfers the 4'-phosphopantetheine moiety from coenzyme A to a Ser of acyl-carrier-protein. In Salmonella choleraesuis (strain SC-B67), this protein is Holo-[acyl-carrier-protein] synthase.